The following is a 644-amino-acid chain: uncharacterized protein (644 aa).

Disordered regions lie at residues methionine 1–serine 35 and glycine 48–asparagine 106. Serine 28 bears the Phosphoserine mark. Residues asparagine 58–serine 70 show a composition bias toward low complexity. Over residues tyrosine 83–asparagine 106 the composition is skewed to polar residues. The next 12 membrane-spanning stretches (helical) occupy residues isoleucine 131 to phenylalanine 151, alanine 190 to methionine 210, leucine 218 to serine 238, tyrosine 245 to alanine 265, leucine 286 to valine 306, tyrosine 314 to leucine 334, valine 398 to leucine 418, leucine 435 to leucine 455, valine 522 to alanine 542, valine 546 to glutamine 566, alanine 583 to valine 603, and asparagine 614 to methionine 634.

It is found in the membrane. This is an uncharacterized protein from Schizosaccharomyces pombe (strain 972 / ATCC 24843) (Fission yeast).